Reading from the N-terminus, the 106-residue chain is MNALSGLRMAQESVGLISVAHQAFVTIAGCGVNALSGLRMAQESVGLISVAHQAFATTAGCGVDALSGLRVARESVGLISVAHQAFVTIAGCGVNALSGLRVAREL.

This is an uncharacterized protein from Escherichia coli (strain K12).